Here is a 295-residue protein sequence, read N- to C-terminus: Glycine N-acyltransferase (295 aa).

3 positions are modified to N6-acetyllysine; alternate: K15, K126, and K140. Residues K15, K126, and K140 each carry the N6-succinyllysine; alternate modification. N6-acetyllysine is present on K158. Position 168 is an N6-succinyllysine (K168). K255 is subject to N6-acetyllysine; alternate. K255 carries the post-translational modification N6-succinyllysine; alternate.

It belongs to the glycine N-acyltransferase family. As to expression, detected in liver (at protein level).

It is found in the mitochondrion. It catalyses the reaction an acyl-CoA + glycine = an N-acylglycine + CoA + H(+). The enzyme catalyses benzoyl-CoA + glycine = N-benzoylglycine + CoA + H(+). In terms of biological role, mitochondrial acyltransferase which transfers an acyl group to the N-terminus of glycine and glutamine, although much less efficiently. Can conjugate a multitude of substrates to form a variety of N-acylglycines, thereby detoxify xenobiotics, such as benzoic acid or salicylic acid, and endogenous organic acids, such as isovaleric acid. The sequence is that of Glycine N-acyltransferase (GLYAT) from Bos taurus (Bovine).